The chain runs to 352 residues: Small ribosomal subunit biogenesis GTPase RsgA (352 aa).

One can recognise a CP-type G domain in the interval Asp109–Phe277. GTP-binding positions include Asn165–Asp168 and Gly219–Ser227. The Zn(2+) site is built by Cys301, Cys306, His308, and Cys314.

It belongs to the TRAFAC class YlqF/YawG GTPase family. RsgA subfamily. In terms of assembly, monomer. Associates with 30S ribosomal subunit, binds 16S rRNA. The cofactor is Zn(2+).

It localises to the cytoplasm. In terms of biological role, one of several proteins that assist in the late maturation steps of the functional core of the 30S ribosomal subunit. Helps release RbfA from mature subunits. May play a role in the assembly of ribosomal proteins into the subunit. Circularly permuted GTPase that catalyzes slow GTP hydrolysis, GTPase activity is stimulated by the 30S ribosomal subunit. The chain is Small ribosomal subunit biogenesis GTPase RsgA from Alcanivorax borkumensis (strain ATCC 700651 / DSM 11573 / NCIMB 13689 / SK2).